Reading from the N-terminus, the 299-residue chain is Tyrosine recombinase XerD (299 aa).

The region spanning Glu2–Leu89 is the Core-binding (CB) domain. Positions Arg110–Ala293 constitute a Tyr recombinase domain. Catalysis depends on residues Arg150, Lys174, His245, Arg248, and His271. The O-(3'-phospho-DNA)-tyrosine intermediate role is filled by Tyr280.

Belongs to the 'phage' integrase family. XerD subfamily. As to quaternary structure, forms a cyclic heterotetrameric complex composed of two molecules of XerC and two molecules of XerD.

It is found in the cytoplasm. Functionally, site-specific tyrosine recombinase, which acts by catalyzing the cutting and rejoining of the recombining DNA molecules. The XerC-XerD complex is essential to convert dimers of the bacterial chromosome into monomers to permit their segregation at cell division. It also contributes to the segregational stability of plasmids. The sequence is that of Tyrosine recombinase XerD from Halalkalibacterium halodurans (strain ATCC BAA-125 / DSM 18197 / FERM 7344 / JCM 9153 / C-125) (Bacillus halodurans).